The chain runs to 211 residues: MHNNSKKNIIWQKHSVTRIKREQKNGHKSIVIWFTGLSGSGKSSIANSLEEILFQNNFNTYLLDGDNIRSSLCSDLSFSILDRNENIRRIGEVSKLMIDAGIIVLVSVISPYRNQRKKIRLMLGKINFLEVFVDTPLNICEERDPKKLYQKSRLGKISDLTGIQSLYEIPEKPDLHLDETISLKNNTKKLIHILCDKNIISFPNIDETFLF.

36–43 contacts ATP; that stretch reads GLSGSGKS. Serine 110 serves as the catalytic Phosphoserine intermediate.

Belongs to the APS kinase family.

It carries out the reaction adenosine 5'-phosphosulfate + ATP = 3'-phosphoadenylyl sulfate + ADP + H(+). Its pathway is sulfur metabolism; hydrogen sulfide biosynthesis; sulfite from sulfate: step 2/3. In terms of biological role, catalyzes the synthesis of activated sulfate. The polypeptide is Adenylyl-sulfate kinase (cysC) (Buchnera aphidicola subsp. Schizaphis graminum (strain Sg)).